A 185-amino-acid polypeptide reads, in one-letter code: Elongation factor P (185 aa).

The protein belongs to the elongation factor P family.

The protein resides in the cytoplasm. The protein operates within protein biosynthesis; polypeptide chain elongation. Its function is as follows. Involved in peptide bond synthesis. Stimulates efficient translation and peptide-bond synthesis on native or reconstituted 70S ribosomes in vitro. Probably functions indirectly by altering the affinity of the ribosome for aminoacyl-tRNA, thus increasing their reactivity as acceptors for peptidyl transferase. This Rippkaea orientalis (strain PCC 8801 / RF-1) (Cyanothece sp. (strain PCC 8801)) protein is Elongation factor P.